The following is a 182-amino-acid chain: Caltractin ICL1b (182 aa).

The segment at 1–31 (MSRRGQQPPPQQQQAPPQKNQAGKFNPAEFV) is disordered. 4 EF-hand domains span residues 38–73 (EEVLEIKEAFDLFDTDGTQSIDPKELKAAMTSLGFE), 74–109 (AKNQTIYQMISDLDTDGSGQIDFAEFLKLMTARISE), 111–146 (DSKADIQKVFNLFDSERAGVITLKDLRKVAKELGET), and 147–182 (MDDSELQEMIDRADSDGDAQVTFEDFYNIMTKKTFA). Residues aspartate 51, aspartate 53, threonine 55, serine 57, glutamate 62, aspartate 87, aspartate 89, serine 91, glutamine 93, and glutamate 98 each contribute to the Ca(2+) site.

This sequence belongs to the centrin family.

The protein localises to the cytoplasm. The protein resides in the cytoskeleton. Plays a fundamental role in microtubule organizing center structure and function. Component of the infraciliary lattice (ICL) and the ciliary basal bodies. This chain is Caltractin ICL1b (Icl1b), found in Paramecium tetraurelia.